Here is a 177-residue protein sequence, read N- to C-terminus: Large ribosomal subunit protein uL6 (177 aa).

The protein belongs to the universal ribosomal protein uL6 family. Part of the 50S ribosomal subunit.

Its function is as follows. This protein binds to the 23S rRNA, and is important in its secondary structure. It is located near the subunit interface in the base of the L7/L12 stalk, and near the tRNA binding site of the peptidyltransferase center. The protein is Large ribosomal subunit protein uL6 of Neisseria meningitidis serogroup B (strain ATCC BAA-335 / MC58).